A 263-amino-acid polypeptide reads, in one-letter code: 3'-5' ssDNA/RNA exonuclease TatD (263 aa).

A divalent metal cation-binding residues include Glu-91, His-127, and His-152.

This sequence belongs to the metallo-dependent hydrolases superfamily. TatD-type hydrolase family. TatD subfamily. In terms of assembly, monomer. Mg(2+) serves as cofactor.

The protein resides in the cytoplasm. In terms of biological role, 3'-5' exonuclease that prefers single-stranded DNA and RNA. May play a role in the H(2)O(2)-induced DNA damage repair. This chain is 3'-5' ssDNA/RNA exonuclease TatD, found in Cronobacter sakazakii (strain ATCC BAA-894) (Enterobacter sakazakii).